The sequence spans 311 residues: MSEKLIIIVGPTAVGKSALGIKVAKKINGEIISGDSMQVYKYMDIGTAKVLPEEREGVPHHLIDILEPFQKYSVALFQKEARRLIKEINERGKIPIIVGGTGLYIRSVIDPYDFTDFSFDPVFRGKLEQAAKEKGSSYLHQMLEKIDPVAAQKIHSNDLRRIIRALEVYEHTGKPISYYWERGKQSKPQYRLLYYGLTMDRALLYQRINERVDKMIEKGLIAEVKRLLQMGFKESTAMQALGYKEIVQYLEGKITLDEAIYLIKRDTRRFAKRQLTWFRRDPRIKWFDSGKESLEKITEKIITEAGVNNFL.

10–17 (GPTAVGKS) is a binding site for ATP. A substrate-binding site is contributed by 12–17 (TAVGKS). Residues 35-38 (DSMQ) are interaction with substrate tRNA.

This sequence belongs to the IPP transferase family. Monomer. Mg(2+) serves as cofactor.

It catalyses the reaction adenosine(37) in tRNA + dimethylallyl diphosphate = N(6)-dimethylallyladenosine(37) in tRNA + diphosphate. In terms of biological role, catalyzes the transfer of a dimethylallyl group onto the adenine at position 37 in tRNAs that read codons beginning with uridine, leading to the formation of N6-(dimethylallyl)adenosine (i(6)A). In Carboxydothermus hydrogenoformans (strain ATCC BAA-161 / DSM 6008 / Z-2901), this protein is tRNA dimethylallyltransferase.